The primary structure comprises 246 residues: E3 ubiquitin-protein ligase MARCHF2 (246 aa).

The RING-CH-type zinc finger occupies aspartate 56 to glutamate 116. Residues aspartate 56–glutamate 116 are required for inhibition of HIV-1 virus production and VSV G protein expression. Residues cysteine 64, cysteine 67, cysteine 80, cysteine 82, histidine 90, cysteine 93, cysteine 106, and cysteine 109 each contribute to the Zn(2+) site. The segment at proline 121–valine 246 is required for interaction with IKBKG. 2 consecutive transmembrane segments (helical) span residues leucine 138–leucine 158 and alanine 175–valine 195.

In terms of assembly, interacts with STX6; the interaction promotes MARCHF2-mediated ubiquitination and degradation of CFTR. Interacts with MARCHF3. Interacts with GOPC/CAL; the interaction leads to CFTR ubiquitination and degradation. Interacts with CFTR; the interaction leads to CFTR ubiqtuitination and degradation. Interacts (via PDZ domain) with DLG1 (via PDZ domains); the interaction leads to DLG1 ubiqtuitination and degradation. Interacts with ERGIC3. Interacts with ADRB2. Interacts with IKBKG/NEMO; during the late stages of macrophage viral and bacterial infection; the interaction leads to ubiquitination and degradation of IKBKG/NEMO. As to expression, broadly expressed.

The protein resides in the endoplasmic reticulum membrane. It is found in the lysosome membrane. It localises to the endosome membrane. The protein localises to the golgi apparatus membrane. Its subcellular location is the cytoplasm. The protein resides in the cell membrane. The catalysed reaction is S-ubiquitinyl-[E2 ubiquitin-conjugating enzyme]-L-cysteine + [acceptor protein]-L-lysine = [E2 ubiquitin-conjugating enzyme]-L-cysteine + N(6)-ubiquitinyl-[acceptor protein]-L-lysine.. Its pathway is protein modification; protein ubiquitination. Functionally, E3 ubiquitin-protein ligase that may mediate ubiquitination of TFRC and CD86, and promote their subsequent endocytosis and sorting to lysosomes via multivesicular bodies. E3 ubiquitin ligases accept ubiquitin from an E2 ubiquitin-conjugating enzyme in the form of a thioester and then directly transfer the ubiquitin to targeted substrates. Together with GOPC/CAL mediates the ubiquitination and lysosomal degradation of CFTR. Ubiquitinates and therefore mediates the degradation of DLG1. Regulates the intracellular trafficking and secretion of alpha1-antitrypsin/SERPINA1 and HP/haptoglobin via ubiquitination and degradation of the cargo receptor ERGIC3. Negatively regulates the antiviral and antibacterial immune response by repression of the NF-kB and type 1 IFN signaling pathways, via MARCHF2-mediated K48-linked polyubiquitination of IKBKG/NEMO, resulting in its proteasomal degradation. May be involved in endosomal trafficking through interaction with STX6. In terms of biological role, (Microbial infection) Positively regulates the degradation of Vesicular stomatitis virus (VSV) G protein via the lysosomal degradation pathway. Represses HIV-1 viral production and may inhibit the translocation of HIV-1 env to the cell surface, resulting in decreased viral cell-cell transmission. This is E3 ubiquitin-protein ligase MARCHF2 from Homo sapiens (Human).